Reading from the N-terminus, the 715-residue chain is Protein DOA1 (715 aa).

WD repeat units follow at residues 11–40 (GHDQ…RLWS), 53–82 (GQGF…NGVP), 97–125 (GHQG…KVWK), 135–166 (AHNA…KLWQ), 177–206 (IHND…KLVD), 218–247 (GHES…RIWS), and 259–288 (LPAI…RIFS). S332 carries the phosphoserine modification. The PFU domain maps to 352–449 (AHQFSNSSWK…NGISLDQPND (98 aa)). The interaction with HSE1 stretch occupies residues 434 to 440 (FILKNTN). The region spanning 465-715 (KVLPVKQYLI…RFKDIFDDLS (251 aa)) is the PUL domain. ARM repeat units follow at residues 478 to 512 (YNPD…LHDI), 513 to 543 (DESW…VRLI), 544 to 582 (VKKL…CFNN), 583 to 635 (ENWG…LVTK), 636 to 680 (GNSD…LATV), and 681 to 715 (EPTL…DDLS).

This sequence belongs to the WD repeat PLAP family. Forms a complex composed of CDC48, NPL4, UFD1, DOA1, SHP1 and deubiquitinase OTU1; within the complex interacts with CDC48. Interacts (via PUL domain) with CDC48 (via C-terminus); the interaction is direct. Forms a complex composed of CDC48, DOA1, deubiquitinase UBP3 and probably BRE5; within the complex interacts with CDC48 and UBP3. May form a complex composed of VPS27, HSE1 and DOA1. Interacts with HSE1 (via SH3 domain). Interacts (via WD repeats and PFU domain) with ubiquitin; the interaction is direct. Interacts with ubiquitinated FZO1 but not unmodified FZO1; the interaction recruits FZO1 to CDC48 and promotes FZO1 proteasomal degradation.

Its subcellular location is the nucleus. It is found in the cytoplasm. The protein localises to the mitochondrion outer membrane. The protein resides in the endosome membrane. Its function is as follows. Ubiquitin-binding protein involved in protein ubiquitination, sorting and degradation. Acts as a ubiquitinated substrate-recruiting adapter for chaperone ATPase CDC48 by binding mono- or polyubiquitin chains. Depending on the context, promotes or prevents proteasomal degradation of ubiquitinated proteins. Involved in the ubiquitin fusion degradation (UFD) pathway by promoting the degradation of ubiquitinated proteins. Involved in the mitochondria-associated degradation pathway (MAD) by promoting the degradation of several ubiquitinated membrane proteins. By competing with UFD2 to bind CDC48, prevents the multi-ubiquitination and subsequent degradation of UFD2-dependent substrates. Required for ribophagy, a process which relocalizes ribosomal particles into the vacuole for degradation in response to starvation. Involved in the ubiquitin-mediated sorting of membrane proteins into multivesicular bodies (MVBs). In addition, plays an essential role in maintaining cellular ubiquitin levels. May affect indirectly the degradation of ubiquitinylated proteins by regulating cellular ubiquitin levels. This is Protein DOA1 from Saccharomyces cerevisiae (strain ATCC 204508 / S288c) (Baker's yeast).